The chain runs to 42 residues: Photosystem I reaction center subunit IX (42 aa).

The helical transmembrane segment at 7-27 threads the bilayer; the sequence is YLSTAPVLAAIWFGILAGLLI.

It belongs to the PsaJ family.

Its subcellular location is the plastid. It localises to the chloroplast thylakoid membrane. Functionally, may help in the organization of the PsaE and PsaF subunits. The protein is Photosystem I reaction center subunit IX of Staurastrum punctulatum (Green alga).